A 527-amino-acid polypeptide reads, in one-letter code: L-amino-acid oxidase (527 aa).

The signal sequence occupies residues 1 to 27 (MDLHRAPWKSSAAAAVLLLALFSGAAA). An intrachain disulfide couples Cys-37 to Cys-200. Asn-58 carries N-linked (GlcNAc...) asparagine glycosylation. FAD is bound by residues 70–71 (VA), 90–91 (EA), Arg-98, 114–117 (GAMR), and Val-288. Arg-117 is a binding site for substrate. An N-linked (GlcNAc...) asparagine glycan is attached at Asn-393. Tyr-403 is a binding site for substrate. FAD is bound by residues Glu-485 and 492 to 497 (AWMESA). Substrate is bound at residue 492 to 493 (AW).

Homodimer. It depends on FAD as a cofactor. Expression mainly observed in plasma, spleen, kidney and gills with low levels detected in blood and no expression detected in brain, liver, heart, muscle or intestine (at protein level).

The protein resides in the secreted. It catalyses the reaction an L-alpha-amino acid + O2 + H2O = a 2-oxocarboxylate + H2O2 + NH4(+). Inhibits the growth of both Gram-negative and Gram-positive bacteria. Displays strong antibacterial activity towards V.cholerae and E.tarda. Causes deformation of the surface of S.aureus and the formation of pores on the surface of E.coli. Strong antiparasitic activity is seen towards C.irritans, T.brucei and I.multifiliis. Cilia of treated theronts are lost and the macronucleus swells, inducing cell membrane rupture and efflux of the cytoplasm. This chain is L-amino-acid oxidase, found in Siganus canaliculatus (White-spotted spinefoot).